Here is a 147-residue protein sequence, read N- to C-terminus: Large ribosomal subunit protein uL13 (147 aa).

Belongs to the universal ribosomal protein uL13 family. Part of the 50S ribosomal subunit.

Functionally, this protein is one of the early assembly proteins of the 50S ribosomal subunit, although it is not seen to bind rRNA by itself. It is important during the early stages of 50S assembly. This chain is Large ribosomal subunit protein uL13, found in Mycolicibacterium smegmatis (strain ATCC 700084 / mc(2)155) (Mycobacterium smegmatis).